We begin with the raw amino-acid sequence, 445 residues long: Methionine aminopeptidase 2 (445 aa).

Residues 1-80 (MAAQVASGVG…TSKVQTEPPR (80 aa)) form a disordered region. Residues 57-71 (AKKKKKKTKKKKKGT) are compositionally biased toward basic residues. Position 195 (histidine 195) interacts with substrate. Residues aspartate 215, aspartate 226, and histidine 295 each contribute to the a divalent metal cation site. Histidine 303 provides a ligand contact to substrate. Glutamate 331 and glutamate 426 together coordinate a divalent metal cation.

It belongs to the peptidase M24A family. Methionine aminopeptidase eukaryotic type 2 subfamily. Requires Co(2+) as cofactor. Zn(2+) is required as a cofactor. The cofactor is Mn(2+). It depends on Fe(2+) as a cofactor.

It is found in the cytoplasm. The enzyme catalyses Release of N-terminal amino acids, preferentially methionine, from peptides and arylamides.. Functionally, cotranslationally removes the N-terminal methionine from nascent proteins. The N-terminal methionine is often cleaved when the second residue in the primary sequence is small and uncharged (Met-Ala-, Cys, Gly, Pro, Ser, Thr, or Val). This chain is Methionine aminopeptidase 2, found in Paracoccidioides brasiliensis (strain Pb03).